The chain runs to 159 residues: 3-dehydroquinate dehydratase (159 aa).

Y22 functions as the Proton acceptor in the catalytic mechanism. N73, H79, and D86 together coordinate substrate. The Proton donor role is filled by H99. Residues 100–101 (IS) and R110 each bind substrate.

Belongs to the type-II 3-dehydroquinase family. Homododecamer.

The enzyme catalyses 3-dehydroquinate = 3-dehydroshikimate + H2O. It participates in metabolic intermediate biosynthesis; chorismate biosynthesis; chorismate from D-erythrose 4-phosphate and phosphoenolpyruvate: step 3/7. In terms of biological role, catalyzes a trans-dehydration via an enolate intermediate. This Campylobacter jejuni subsp. doylei (strain ATCC BAA-1458 / RM4099 / 269.97) protein is 3-dehydroquinate dehydratase.